Reading from the N-terminus, the 208-residue chain is Glutathione S-transferase F6 (208 aa).

In terms of domain architecture, GST N-terminal spans 2 to 83 (AGIKVFGHPA…YIAHEFSDKG (82 aa)). Glutathione is bound by residues 12-13 (ST), 41-42 (HK), 54-55 (KV), and 67-68 (ES). Residues 89–208 (TGKDMAIIAM…TSRPSAQKVL (120 aa)) enclose the GST C-terminal domain.

This sequence belongs to the GST superfamily. Phi family.

It localises to the cytoplasm. The protein resides in the cytosol. It carries out the reaction RX + glutathione = an S-substituted glutathione + a halide anion + H(+). Its function is as follows. Involved in camalexin biosynthesis by probably catalyzing the conjugation of GSH with indole-3-acetonitrile (IAN). May be involved in the conjugation of reduced glutathione to a wide number of exogenous and endogenous hydrophobic electrophiles and have a detoxification role against certain herbicides. This is Glutathione S-transferase F6 (GSTF6) from Arabidopsis thaliana (Mouse-ear cress).